Here is a 149-residue protein sequence, read N- to C-terminus: Nucleoside diphosphate kinase (149 aa).

ATP contacts are provided by lysine 9, phenylalanine 57, arginine 85, threonine 91, arginine 102, and asparagine 112. The Pros-phosphohistidine intermediate role is filled by histidine 115.

The protein belongs to the NDK family. Homotetramer. The cofactor is Mg(2+).

Its subcellular location is the cytoplasm. The catalysed reaction is a 2'-deoxyribonucleoside 5'-diphosphate + ATP = a 2'-deoxyribonucleoside 5'-triphosphate + ADP. It carries out the reaction a ribonucleoside 5'-diphosphate + ATP = a ribonucleoside 5'-triphosphate + ADP. In terms of biological role, major role in the synthesis of nucleoside triphosphates other than ATP. The ATP gamma phosphate is transferred to the NDP beta phosphate via a ping-pong mechanism, using a phosphorylated active-site intermediate. In Staphylococcus aureus (strain Mu3 / ATCC 700698), this protein is Nucleoside diphosphate kinase.